The chain runs to 563 residues: Eukaryotic translation initiation factor 3 subunit D (563 aa).

Positions 95-136 (PGYMRNRNRFNQRGGYRRDNRGGRFQGQGGNMGMQNLSRGRD) are disordered. The tract at residues 294 to 308 (EFDLLTVGETANDLN) is RNA gate. The tract at residues 528–563 (IPNSTFETDEEDDDDDEDDVENDDGDDEKDEGDGED) is disordered. The segment covering 534–563 (ETDEEDDDDDEDDVENDDGDDEKDEGDGED) has biased composition (acidic residues).

The protein belongs to the eIF-3 subunit D family. In terms of assembly, component of the eukaryotic translation initiation factor 3 (eIF-3) complex.

The protein resides in the cytoplasm. In terms of biological role, mRNA cap-binding component of the eukaryotic translation initiation factor 3 (eIF-3) complex, which is involved in protein synthesis of a specialized repertoire of mRNAs and, together with other initiation factors, stimulates binding of mRNA and methionyl-tRNAi to the 40S ribosome. The eIF-3 complex specifically targets and initiates translation of a subset of mRNAs involved in cell proliferation. In the eIF-3 complex, eif3d specifically recognizes and binds the 7-methylguanosine cap of a subset of mRNAs. The chain is Eukaryotic translation initiation factor 3 subunit D from Nematostella vectensis (Starlet sea anemone).